The following is a 335-amino-acid chain: Nucleoid-associated protein PC1_1634 (335 aa).

It belongs to the YejK family.

It is found in the cytoplasm. The protein localises to the nucleoid. The chain is Nucleoid-associated protein PC1_1634 from Pectobacterium carotovorum subsp. carotovorum (strain PC1).